Here is a 421-residue protein sequence, read N- to C-terminus: Isocitrate dehydrogenase [NADP], mitochondrial (421 aa).

Residues 1–8 (ARAAARHY) constitute a mitochondrion transit peptide. Residues Lys14, Lys17, Lys36, and Lys38 each carry the N6-acetyllysine modification. N6-acetyllysine; alternate occurs at positions 49 and 75. N6-succinyllysine; alternate is present on residues Lys49 and Lys75. NADP(+) is bound by residues 84-86 (TIT) and Arg91. Position 86 (Thr86) interacts with D-threo-isocitrate. D-threo-isocitrate contacts are provided by residues 103–109 (SPNGTIR) and Arg118. Residue Lys124 is modified to N6-acetyllysine. Lys135 is modified (N6-acetyllysine; alternate). Lys135 carries the N6-succinyllysine; alternate modification. Arg141 is a D-threo-isocitrate binding site. N6-acetyllysine; alternate occurs at positions 149 and 162. 2 positions are modified to N6-succinyllysine; alternate: Lys149 and Lys162. Lys168 bears the N6-acetyllysine mark. Position 225 is an N6-acetyllysine; alternate (Lys225). Lys225 bears the N6-succinyllysine; alternate mark. 4 positions are modified to N6-acetyllysine: Lys232, Lys241, Lys244, and Lys249. Lys251 carries the N6-acetyllysine; alternate modification. Lys251 carries the post-translational modification N6-succinyllysine; alternate. Asp260 is a Mn(2+) binding site. Position 268 (Lys268) interacts with NADP(+). Asp283 is a Mn(2+) binding site. NADP(+) is bound by residues 318–323 (GTVTRH) and Asn336. The residue at position 353 (Lys353) is an N6-acetyllysine; alternate. Lys353 carries the post-translational modification N6-succinyllysine; alternate. Lys369, Lys382, and Lys411 each carry N6-acetyllysine.

Belongs to the isocitrate and isopropylmalate dehydrogenases family. Homodimer. Mg(2+) is required as a cofactor. The cofactor is Mn(2+). In terms of processing, acetylation at Lys-382 dramatically reduces catalytic activity. Deacetylated by SIRT3.

Its subcellular location is the mitochondrion. The catalysed reaction is D-threo-isocitrate + NADP(+) = 2-oxoglutarate + CO2 + NADPH. Plays a role in intermediary metabolism and energy production. It may tightly associate or interact with the pyruvate dehydrogenase complex. This Sus scrofa (Pig) protein is Isocitrate dehydrogenase [NADP], mitochondrial (IDH2).